Reading from the N-terminus, the 342-residue chain is UDP-glucuronic acid decarboxylase 3 (342 aa).

Polar residues predominate over residues 1 to 11 (MAATSEKQNTT). A disordered region spans residues 1–22 (MAATSEKQNTTKPPPSPSPLRN). 61–86 (DNYFTGSKENLKKWIGHPRFELIRHD) contacts NAD(+). Position 170 (R170) interacts with substrate. Residue Y173 is the Proton acceptor of the active site. 173 to 177 (YDEGK) lines the NAD(+) pocket. A substrate-binding site is contributed by N202. R214 contributes to the NAD(+) binding site. Substrate is bound by residues 215–219 (VVSNF), 232–239 (QKPGTQTR), and 299–303 (DPRQR).

Belongs to the NAD(P)-dependent epimerase/dehydratase family. UDP-glucuronic acid decarboxylase subfamily. The cofactor is NAD(+). Ubiquitous.

The protein resides in the cytoplasm. It carries out the reaction UDP-alpha-D-glucuronate + H(+) = UDP-alpha-D-xylose + CO2. The protein operates within nucleotide-sugar biosynthesis; UDP-alpha-D-xylose biosynthesis; UDP-alpha-D-xylose from UDP-alpha-D-glucuronate: step 1/1. Functionally, catalyzes the NAD-dependent decarboxylation of UDP-glucuronic acid to UDP-xylose. Necessary for the biosynthesis of the core tetrasaccharide in glycosaminoglycan biosynthesis. This chain is UDP-glucuronic acid decarboxylase 3 (UXS3), found in Arabidopsis thaliana (Mouse-ear cress).